A 227-amino-acid chain; its full sequence is Cytochrome c oxidase subunit 2 (227 aa).

The Mitochondrial intermembrane portion of the chain corresponds to 1 to 14; that stretch reads MAYPFQLGLQDATS. A helical transmembrane segment spans residues 15–45; it reads PIMEELLHFHDHTLMIVFLISSLVLYIITLM. Residues 46–59 lie on the Mitochondrial matrix side of the membrane; it reads LTTKLTHTSTMDAQ. The chain crosses the membrane as a helical span at residues 60-87; the sequence is EVETVWTILPAIILVLIALPSLRILYMM. The Mitochondrial intermembrane portion of the chain corresponds to 88-227; that stretch reads DEINNPSLTV…YFETWSALMV (140 aa). Residues His-161, Cys-196, Glu-198, Cys-200, His-204, and Met-207 each contribute to the Cu cation site. Glu-198 provides a ligand contact to Mg(2+). Tyr-218 is subject to Phosphotyrosine.

This sequence belongs to the cytochrome c oxidase subunit 2 family. In terms of assembly, component of the cytochrome c oxidase (complex IV, CIV), a multisubunit enzyme composed of 14 subunits. The complex is composed of a catalytic core of 3 subunits MT-CO1, MT-CO2 and MT-CO3, encoded in the mitochondrial DNA, and 11 supernumerary subunits COX4I, COX5A, COX5B, COX6A, COX6B, COX6C, COX7A, COX7B, COX7C, COX8 and NDUFA4, which are encoded in the nuclear genome. The complex exists as a monomer or a dimer and forms supercomplexes (SCs) in the inner mitochondrial membrane with NADH-ubiquinone oxidoreductase (complex I, CI) and ubiquinol-cytochrome c oxidoreductase (cytochrome b-c1 complex, complex III, CIII), resulting in different assemblies (supercomplex SCI(1)III(2)IV(1) and megacomplex MCI(2)III(2)IV(2)). Found in a complex with TMEM177, COA6, COX18, COX20, SCO1 and SCO2. Interacts with TMEM177 in a COX20-dependent manner. Interacts with COX20. Interacts with COX16. Cu cation is required as a cofactor.

It localises to the mitochondrion inner membrane. The enzyme catalyses 4 Fe(II)-[cytochrome c] + O2 + 8 H(+)(in) = 4 Fe(III)-[cytochrome c] + 2 H2O + 4 H(+)(out). Its function is as follows. Component of the cytochrome c oxidase, the last enzyme in the mitochondrial electron transport chain which drives oxidative phosphorylation. The respiratory chain contains 3 multisubunit complexes succinate dehydrogenase (complex II, CII), ubiquinol-cytochrome c oxidoreductase (cytochrome b-c1 complex, complex III, CIII) and cytochrome c oxidase (complex IV, CIV), that cooperate to transfer electrons derived from NADH and succinate to molecular oxygen, creating an electrochemical gradient over the inner membrane that drives transmembrane transport and the ATP synthase. Cytochrome c oxidase is the component of the respiratory chain that catalyzes the reduction of oxygen to water. Electrons originating from reduced cytochrome c in the intermembrane space (IMS) are transferred via the dinuclear copper A center (CU(A)) of subunit 2 and heme A of subunit 1 to the active site in subunit 1, a binuclear center (BNC) formed by heme A3 and copper B (CU(B)). The BNC reduces molecular oxygen to 2 water molecules using 4 electrons from cytochrome c in the IMS and 4 protons from the mitochondrial matrix. This Vulpes zerda (Fennec fox) protein is Cytochrome c oxidase subunit 2 (MT-CO2).